Consider the following 472-residue polypeptide: Uronate isomerase (472 aa).

This sequence belongs to the metallo-dependent hydrolases superfamily. Uronate isomerase family.

It carries out the reaction D-glucuronate = D-fructuronate. The enzyme catalyses aldehydo-D-galacturonate = keto-D-tagaturonate. It participates in carbohydrate metabolism; pentose and glucuronate interconversion. This Shouchella clausii (strain KSM-K16) (Alkalihalobacillus clausii) protein is Uronate isomerase.